Reading from the N-terminus, the 87-residue chain is MANSAGSKKRARQAVKSRAHNGSLRSMVRTYLKKVDAAIEAGNQADAQAAYVLATSKLDKAADKGLYHKNKAARHKSRLSAKIKALA.

A disordered region spans residues 1–22 (MANSAGSKKRARQAVKSRAHNG). Positions 7 to 19 (SKKRARQAVKSRA) are enriched in basic residues.

Belongs to the bacterial ribosomal protein bS20 family.

Its function is as follows. Binds directly to 16S ribosomal RNA. The chain is Small ribosomal subunit protein bS20 from Marinomonas sp. (strain MWYL1).